A 269-amino-acid polypeptide reads, in one-letter code: Pyrroline-5-carboxylate reductase (269 aa).

This sequence belongs to the pyrroline-5-carboxylate reductase family.

The protein localises to the cytoplasm. It carries out the reaction L-proline + NADP(+) = (S)-1-pyrroline-5-carboxylate + NADPH + 2 H(+). The catalysed reaction is L-proline + NAD(+) = (S)-1-pyrroline-5-carboxylate + NADH + 2 H(+). The protein operates within amino-acid biosynthesis; L-proline biosynthesis; L-proline from L-glutamate 5-semialdehyde: step 1/1. Its activity is regulated as follows. Inhibited by p-chloromercuribenzoate. Its function is as follows. Catalyzes the reduction of 1-pyrroline-5-carboxylate (PCA) to L-proline. Does not catalyze the reverse reaction. In Escherichia coli (strain K12), this protein is Pyrroline-5-carboxylate reductase.